Consider the following 506-residue polypeptide: ATP synthase subunit alpha (506 aa).

Residue 170–177 (GDRQTGKT) coordinates ATP.

It belongs to the ATPase alpha/beta chains family. As to quaternary structure, F-type ATPases have 2 components, CF(1) - the catalytic core - and CF(0) - the membrane proton channel. CF(1) has five subunits: alpha(3), beta(3), gamma(1), delta(1), epsilon(1). CF(0) has four main subunits: a(1), b(1), b'(1) and c(9-12).

It is found in the cellular thylakoid membrane. It carries out the reaction ATP + H2O + 4 H(+)(in) = ADP + phosphate + 5 H(+)(out). In terms of biological role, produces ATP from ADP in the presence of a proton gradient across the membrane. The alpha chain is a regulatory subunit. In Synechococcus sp. (strain JA-3-3Ab) (Cyanobacteria bacterium Yellowstone A-Prime), this protein is ATP synthase subunit alpha.